The sequence spans 119 residues: UPF0102 protein GFO_3098 (119 aa).

This sequence belongs to the UPF0102 family.

The polypeptide is UPF0102 protein GFO_3098 (Christiangramia forsetii (strain DSM 17595 / CGMCC 1.15422 / KT0803) (Gramella forsetii)).